A 296-amino-acid chain; its full sequence is Ethanolamine ammonia-lyase small subunit (296 aa).

Adenosylcob(III)alamin-binding residues include Val-209 and Glu-230.

The protein belongs to the EutC family. As to quaternary structure, the basic unit is a heterodimer which dimerizes to form tetramers. The heterotetramers trimerize; 6 large subunits form a core ring with 6 small subunits projecting outwards. The cofactor is adenosylcob(III)alamin.

It localises to the bacterial microcompartment. The catalysed reaction is ethanolamine = acetaldehyde + NH4(+). The protein operates within amine and polyamine degradation; ethanolamine degradation. Its function is as follows. Catalyzes the deamination of various vicinal amino-alcohols to oxo compounds. Allows this organism to utilize ethanolamine as the sole source of nitrogen and carbon in the presence of external vitamin B12. This is Ethanolamine ammonia-lyase small subunit from Lachnoclostridium phytofermentans (strain ATCC 700394 / DSM 18823 / ISDg) (Clostridium phytofermentans).